The following is a 326-amino-acid chain: RNA/RNP complex-1-interacting phosphatase (326 aa).

Residues 1 to 28 (MNQWHYGRYSRGRDFTARAPPKKKGKNQ) form a disordered region. The region spanning 59–206 (FEAKLMPEEC…LQKRRVRKNQ (148 aa)) is the Tyrosine-protein phosphatase domain. Catalysis depends on C150, which acts as the Phosphocysteine intermediate. A substrate-binding site is contributed by 151-156 (THGLNR). The Proton donor/acceptor role is filled by R156. The disordered stretch occupies residues 200 to 258 (RRVRKNQNASASRSGGLEDSAHLTEQVHTTNKPVNKGPKKSRRGGHLESSQHVQTQSSA). Residues 247–258 (ESSQHVQTQSSA) are compositionally biased toward polar residues.

This sequence belongs to the protein-tyrosine phosphatase family. Non-receptor class dual specificity subfamily. As to quaternary structure, monomer. May interact with SFRS7 and SFRS9/SRP30C.

The protein localises to the nucleus. It is found in the nucleus speckle. Functionally, possesses RNA 5'-triphosphatase and diphosphatase activities, but displays a poor protein-tyrosine phosphatase activity. In addition, has phosphatase activity with ATP, ADP and O-methylfluorescein phosphate (in vitro). Binds to RNA. May participate in nuclear mRNA metabolism. This Rattus norvegicus (Rat) protein is RNA/RNP complex-1-interacting phosphatase (Dusp11).